Consider the following 208-residue polypeptide: Uracil phosphoribosyltransferase (208 aa).

5-phospho-alpha-D-ribose 1-diphosphate is bound by residues Arg-78, Arg-103, and 130 to 138 (DPMLATGGS). Residues Ile-193 and 198 to 200 (GDA) each bind uracil. 5-phospho-alpha-D-ribose 1-diphosphate is bound at residue Asp-199.

Belongs to the UPRTase family. Mg(2+) serves as cofactor.

It carries out the reaction UMP + diphosphate = 5-phospho-alpha-D-ribose 1-diphosphate + uracil. It participates in pyrimidine metabolism; UMP biosynthesis via salvage pathway; UMP from uracil: step 1/1. With respect to regulation, allosterically activated by GTP. Functionally, catalyzes the conversion of uracil and 5-phospho-alpha-D-ribose 1-diphosphate (PRPP) to UMP and diphosphate. This is Uracil phosphoribosyltransferase from Shewanella piezotolerans (strain WP3 / JCM 13877).